The chain runs to 247 residues: ATP synthase subunit a, chloroplastic (247 aa).

Transmembrane regions (helical) follow at residues 38 to 58, 95 to 115, 134 to 154, 199 to 219, and 220 to 240; these read QVLI…IIAV, VPFI…GALL, INTT…AGLS, LVVV…VMFL, and GLFT…AYIG.

It belongs to the ATPase A chain family. F-type ATPases have 2 components, CF(1) - the catalytic core - and CF(0) - the membrane proton channel. CF(1) has five subunits: alpha(3), beta(3), gamma(1), delta(1), epsilon(1). CF(0) has four main subunits: a, b, b' and c.

It localises to the plastid. The protein resides in the chloroplast thylakoid membrane. Its function is as follows. Key component of the proton channel; it plays a direct role in the translocation of protons across the membrane. The polypeptide is ATP synthase subunit a, chloroplastic (Sorghum bicolor (Sorghum)).